The primary structure comprises 419 residues: UDP-N-acetylglucosamine 1-carboxyvinyltransferase (419 aa).

Phosphoenolpyruvate is bound at residue 22–23; it reads KN. Arg91 contacts UDP-N-acetyl-alpha-D-glucosamine. Cys115 (proton donor) is an active-site residue. The residue at position 115 (Cys115) is a 2-(S-cysteinyl)pyruvic acid O-phosphothioketal. UDP-N-acetyl-alpha-D-glucosamine is bound by residues 120–124, 160–163, Asp305, and Val327; these read RPVDL and KVSV.

The protein belongs to the EPSP synthase family. MurA subfamily.

It is found in the cytoplasm. It carries out the reaction phosphoenolpyruvate + UDP-N-acetyl-alpha-D-glucosamine = UDP-N-acetyl-3-O-(1-carboxyvinyl)-alpha-D-glucosamine + phosphate. The protein operates within cell wall biogenesis; peptidoglycan biosynthesis. Its function is as follows. Cell wall formation. Adds enolpyruvyl to UDP-N-acetylglucosamine. The sequence is that of UDP-N-acetylglucosamine 1-carboxyvinyltransferase from Shigella dysenteriae serotype 1 (strain Sd197).